Reading from the N-terminus, the 690-residue chain is Quinohemoprotein alcohol dehydrogenase ADH IIB (690 aa).

Positions 1 to 22 (MKKPLRTSLLMLCLATPLAALA) are cleaved as a signal peptide. Glu81 is a binding site for pyrroloquinoline quinone. A disulfide bond links Cys127 and Cys128. Residues Arg133, Thr177, and 193–194 (GA) contribute to the pyrroloquinoline quinone site. Glu195 contacts Ca(2+). Thr252 provides a ligand contact to pyrroloquinoline quinone. The Ca(2+) site is built by Asn272 and Asp317. Asp317 functions as the Proton acceptor in the catalytic mechanism. Pyrroloquinoline quinone-binding positions include Lys344, 404-405 (NW), and Val547. In terms of domain architecture, Cytochrome c spans 600–678 (EQVQAGKQLY…QIKLYVMSRE (79 aa)). Heme c is bound by residues Cys613, Cys616, His617, and Met655.

The protein belongs to the bacterial PQQ dehydrogenase family. In terms of assembly, monomer. Pyrroloquinoline quinone is required as a cofactor. The cofactor is Ca(2+). Heme c serves as cofactor.

The protein resides in the periplasm. It catalyses the reaction 2 oxidized [azurin] + a primary alcohol = 2 reduced [azurin] + an aldehyde + 2 H(+). Inhibited by 10 mM 1-butanol. Functionally, catalyzes the dye-linked oxidation of primary alcohols to the corresponding aldehydes and the (subsequent) oxidation of the aldehydes to carboxylic acids. Exhibits activity with longer mono-alcohols (C-4 to C-7) but not with methanol or glycerol. Reacts with 1,2-propanediol and 1,3-propanediol but not with sugar alcohols such as D-sorbitol. The sequence is that of Quinohemoprotein alcohol dehydrogenase ADH IIB from Pseudomonas putida (Arthrobacter siderocapsulatus).